A 150-amino-acid polypeptide reads, in one-letter code: UPF0506 protein SJCHGC02380 (150 aa).

A signal peptide spans 1–18 (MNTCIQLLILCLVTVINS). Residues asparagine 20, asparagine 24, asparagine 36, asparagine 48, asparagine 52, and asparagine 110 are each glycosylated (N-linked (GlcNAc...) asparagine). 3 disulfides stabilise this stretch: cysteine 116-cysteine 130, cysteine 123-cysteine 134, and cysteine 129-cysteine 139.

The protein belongs to the UPF0506 family.

It is found in the secreted. This chain is UPF0506 protein SJCHGC02380, found in Schistosoma japonicum (Blood fluke).